A 476-amino-acid chain; its full sequence is Vitamin D-binding protein (476 aa).

Positions 1 to 16 are cleaved as a signal peptide; sequence MKRVLVLLLALAFGHA. Albumin domains are found at residues 17–208, 209–394, and 395–476; these read LERG…QMKH, LSLL…LLKR, and QLTS…TLQS. 14 disulfide bridges follow: C29/C75, C74/C83, C96/C112, C111/C122, C145/C190, C189/C198, C220/C266, C265/C273, C286/C300, C299/C311, C335/C376, C375/C384, C407/C453, and C452/C462. N288 carries N-linked (GlcNAc...) asparagine glycosylation. S434 carries the post-translational modification Phosphoserine.

Belongs to the ALB/AFP/VDB family. Associates with membrane-bound immunoglobulin on the surface of B-lymphocytes and with IgG Fc receptor on the membranes of T-lymphocytes. Interacts with LRP2; the interaction is required for renal uptake of GC in complex with 25-hydroxyvitamin D3.

Its subcellular location is the secreted. In terms of biological role, involved in vitamin D transport and storage, scavenging of extracellular G-actin, enhancement of the chemotactic activity of C5 alpha for neutrophils in inflammation and macrophage activation. This is Vitamin D-binding protein (Gc) from Mus musculus (Mouse).